The sequence spans 338 residues: tRNA N6-adenosine threonylcarbamoyltransferase (338 aa).

The Fe cation site is built by His-110 and His-114. Substrate is bound by residues 132–136 (ILSGG), Asp-165, Gly-178, and Asn-274. Asp-298 serves as a coordination point for Fe cation.

The protein belongs to the KAE1 / TsaD family. Fe(2+) serves as cofactor.

Its subcellular location is the cytoplasm. It catalyses the reaction L-threonylcarbamoyladenylate + adenosine(37) in tRNA = N(6)-L-threonylcarbamoyladenosine(37) in tRNA + AMP + H(+). Its function is as follows. Required for the formation of a threonylcarbamoyl group on adenosine at position 37 (t(6)A37) in tRNAs that read codons beginning with adenine. Is involved in the transfer of the threonylcarbamoyl moiety of threonylcarbamoyl-AMP (TC-AMP) to the N6 group of A37, together with TsaE and TsaB. TsaD likely plays a direct catalytic role in this reaction. This is tRNA N6-adenosine threonylcarbamoyltransferase from Borrelia hermsii (strain HS1 / DAH).